Reading from the N-terminus, the 244-residue chain is Ethylene-responsive transcription factor 1 (244 aa).

Residues 106–164 constitute a DNA-binding region (AP2/ERF); sequence HYRGVRQRPWGKFAAEIRDPAKNGARVWLGTYESAEEAALAYGKAAFRMRGTKALLNFP. Low complexity predominate over residues 186 to 198; sequence SASSSVSSASESG. The tract at residues 186–214 is disordered; it reads SASSSVSSASESGSPKRRRKGVAAKQAEL.

Belongs to the ethylene-response factor family. Class 1 subfamily. In terms of tissue distribution, present in stems.

The protein resides in the nucleus. Involved in the regulation of gene expression during fruit ripening, by stress factors and by components of stress signal transduction pathways. Transcription factor that binds to the GCC-box pathogenesis-related promoter element. Probably acts as a transcriptional activator and may be involved in disease resistance pathways. In Solanum lycopersicum (Tomato), this protein is Ethylene-responsive transcription factor 1 (ERF1).